Reading from the N-terminus, the 600-residue chain is Elongation factor 4 (600 aa).

The 183-residue stretch at 5–187 (KYIRNFSIIA…AIINKLPSPK (183 aa)) folds into the tr-type G domain. GTP is bound by residues 17–22 (DHGKST) and 134–137 (NKID).

The protein belongs to the TRAFAC class translation factor GTPase superfamily. Classic translation factor GTPase family. LepA subfamily.

It localises to the cell inner membrane. The catalysed reaction is GTP + H2O = GDP + phosphate + H(+). Required for accurate and efficient protein synthesis under certain stress conditions. May act as a fidelity factor of the translation reaction, by catalyzing a one-codon backward translocation of tRNAs on improperly translocated ribosomes. Back-translocation proceeds from a post-translocation (POST) complex to a pre-translocation (PRE) complex, thus giving elongation factor G a second chance to translocate the tRNAs correctly. Binds to ribosomes in a GTP-dependent manner. This chain is Elongation factor 4, found in Rickettsia typhi (strain ATCC VR-144 / Wilmington).